The chain runs to 759 residues: MRYNQYSYTKASEEVMLDELARLGFTIQTTNSPKENLHHFLQKILFRYQDVNYVLSSWVADQKTDLLTFFQSDKQLTEEVFYTVALQVLGFAPFVDFDDVTAFCKEIHFPITYGNILENLYQLLNTRTKLGNTLIDQLVSEGFIPESNDYHFFNGKSLATFSSHEAIREVVYVESRVDTDGDGKPDLVKVSIIRPSYEGQVPAVMTASPYHQGTNDKASDKALHNMNVDLSCKNPRTITVQESSIQTIEPQGQASLVEKAEEKLGHIGSYTLNDYLLPRGFANLYVSGVGTKDSEGMMTSGDYQQIEAYKNVIDWLNGRCRAFTDHTRQREIKATWSNGKVATTGISYLGTMSNGLATTGVDGLEVIIAEAGISSWYNYYRENGLVTSPGGYPGEDFESLTELTYSRNLLAGEYLRHNQAYQAYLDQQRKDLERETGDYNQFWHDRNYLIHADKVKAEVVFTHGSQDWNVKPLHVYNMFHALPAHIKKHLFFHNGAHVYINNWQSIDFRESMNALLSKKLLGHSSDFDLPPVIWQDNSQAQNWMSLDDFGNQEDYSHFHLGKGSQEIRNRYSDEDYNRFAKSYQVFKNELFEGKTQQITLDWTLEQDLFINGPAKLKLRLKSSTNKGLISAQLLDYWPAKRLTPIPSLLEPRVMDNGRYYMLDNLMELPFADTPHRVITKGFLNLQNRTDLLTVEEVVPNQWMELSFELQPTIYKLKKGDQLRLVLYTTDFEHTVRDKTDYHLSVDMEHSSLSLPHKKS.

Residues serine 347, aspartate 467, and histidine 497 each act as charge relay system in the active site.

Belongs to the peptidase S15 family. As to quaternary structure, homodimer.

Its subcellular location is the cytoplasm. It catalyses the reaction Hydrolyzes Xaa-Pro-|- bonds to release unblocked, N-terminal dipeptides from substrates including Ala-Pro-|-p-nitroanilide and (sequentially) Tyr-Pro-|-Phe-Pro-|-Gly-Pro-|-Ile.. In terms of biological role, removes N-terminal dipeptides sequentially from polypeptides having unsubstituted N-termini provided that the penultimate residue is proline. In Streptococcus gordonii (strain Challis / ATCC 35105 / BCRC 15272 / CH1 / DL1 / V288), this protein is Xaa-Pro dipeptidyl-peptidase.